Here is a 130-residue protein sequence, read N- to C-terminus: Small ribosomal subunit protein uS9 (130 aa).

Residues Leu-104–Arg-130 form a disordered region. The segment covering Lys-111 to Arg-130 has biased composition (basic residues).

The protein belongs to the universal ribosomal protein uS9 family.

This Moorella thermoacetica (strain ATCC 39073 / JCM 9320) protein is Small ribosomal subunit protein uS9.